The chain runs to 393 residues: Bifunctional enzyme IspD/IspF (393 aa).

A 2-C-methyl-D-erythritol 4-phosphate cytidylyltransferase region spans residues 1–234 (MTTSQRTAAI…ARLAASLGDI (234 aa)). The segment at 235-393 (RTGTGYDVHA…SATIRLPWGA (159 aa)) is 2-C-methyl-D-erythritol 2,4-cyclodiphosphate synthase. Residues D241 and H243 each contribute to the a divalent metal cation site. Residues 241–243 (DVH) and 267–268 (HS) each bind 4-CDP-2-C-methyl-D-erythritol 2-phosphate. Residue H275 participates in a divalent metal cation binding. Residues 289–291 (DIG), 365–368 (TTSE), F372, and R375 each bind 4-CDP-2-C-methyl-D-erythritol 2-phosphate.

The protein in the N-terminal section; belongs to the IspD/TarI cytidylyltransferase family. IspD subfamily. It in the C-terminal section; belongs to the IspF family. Requires a divalent metal cation as cofactor.

It carries out the reaction 2-C-methyl-D-erythritol 4-phosphate + CTP + H(+) = 4-CDP-2-C-methyl-D-erythritol + diphosphate. The catalysed reaction is 4-CDP-2-C-methyl-D-erythritol 2-phosphate = 2-C-methyl-D-erythritol 2,4-cyclic diphosphate + CMP. It functions in the pathway isoprenoid biosynthesis; isopentenyl diphosphate biosynthesis via DXP pathway; isopentenyl diphosphate from 1-deoxy-D-xylulose 5-phosphate: step 2/6. It participates in isoprenoid biosynthesis; isopentenyl diphosphate biosynthesis via DXP pathway; isopentenyl diphosphate from 1-deoxy-D-xylulose 5-phosphate: step 4/6. Bifunctional enzyme that catalyzes the formation of 4-diphosphocytidyl-2-C-methyl-D-erythritol from CTP and 2-C-methyl-D-erythritol 4-phosphate (MEP) (IspD), and catalyzes the conversion of 4-diphosphocytidyl-2-C-methyl-D-erythritol 2-phosphate (CDP-ME2P) to 2-C-methyl-D-erythritol 2,4-cyclodiphosphate (ME-CPP) with a corresponding release of cytidine 5-monophosphate (CMP) (IspF). The sequence is that of Bifunctional enzyme IspD/IspF from Bradyrhizobium sp. (strain ORS 278).